A 222-amino-acid chain; its full sequence is Iron-sulfur cluster repair protein YtfE (222 aa).

The protein belongs to the RIC family. YtfE subfamily. In terms of assembly, homodimer.

The protein localises to the cytoplasm. In terms of biological role, di-iron-containing protein involved in the repair of iron-sulfur clusters damaged by oxidative and nitrosative stress conditions. In Musicola paradisiaca (strain Ech703) (Dickeya paradisiaca), this protein is Iron-sulfur cluster repair protein YtfE.